A 364-amino-acid chain; its full sequence is Uroporphyrinogen decarboxylase (364 aa).

Substrate-binding positions include 28–32, Asp78, Tyr160, Thr215, and His333; that span reads RQAGR.

The protein belongs to the uroporphyrinogen decarboxylase family. As to quaternary structure, homodimer.

The protein resides in the cytoplasm. It catalyses the reaction uroporphyrinogen III + 4 H(+) = coproporphyrinogen III + 4 CO2. It participates in porphyrin-containing compound metabolism; protoporphyrin-IX biosynthesis; coproporphyrinogen-III from 5-aminolevulinate: step 4/4. Its function is as follows. Catalyzes the decarboxylation of four acetate groups of uroporphyrinogen-III to yield coproporphyrinogen-III. This is Uroporphyrinogen decarboxylase from Burkholderia pseudomallei (strain 1106a).